The following is a 688-amino-acid chain: Potassium-transporting ATPase ATP-binding subunit (688 aa).

The next 4 membrane-spanning stretches (helical) occupy residues Phe37 to Ile57, Ile65 to Ile85, Ile219 to Leu239, and Val262 to Ile282. Catalysis depends on Asp313, which acts as the 4-aspartylphosphate intermediate. ATP-binding positions include Asp350, Glu354, Phe383–Ser390, and Lys401. Residues Asp524 and Asp528 each contribute to the Mg(2+) site. Helical transmembrane passes span Phe594–Met614, Ala622–Leu642, and Ile668–Val688.

Belongs to the cation transport ATPase (P-type) (TC 3.A.3) family. Type IA subfamily. The system is composed of three essential subunits: KdpA, KdpB and KdpC.

The protein resides in the cell membrane. The enzyme catalyses K(+)(out) + ATP + H2O = K(+)(in) + ADP + phosphate + H(+). In terms of biological role, part of the high-affinity ATP-driven potassium transport (or Kdp) system, which catalyzes the hydrolysis of ATP coupled with the electrogenic transport of potassium into the cytoplasm. This subunit is responsible for energy coupling to the transport system and for the release of the potassium ions to the cytoplasm. The protein is Potassium-transporting ATPase ATP-binding subunit of Clostridium botulinum (strain Alaska E43 / Type E3).